Reading from the N-terminus, the 296-residue chain is Protoheme IX farnesyltransferase 2 (296 aa).

The next 9 membrane-spanning stretches (helical) occupy residues 7–27, 36–56, 83–103, 108–128, 134–154, 163–183, 207–227, 229–249, and 265–285; these read LLVA…GGYF, PMLL…GCVL, LKAA…LLWW, LTTA…SLWF, YGTL…YCAV, ASLL…IAIF, IHIV…CLGG, AGYG…AIAL, and FAFS…DFQV.

The protein belongs to the UbiA prenyltransferase family. Protoheme IX farnesyltransferase subfamily.

The protein resides in the cell inner membrane. The catalysed reaction is heme b + (2E,6E)-farnesyl diphosphate + H2O = Fe(II)-heme o + diphosphate. It functions in the pathway porphyrin-containing compound metabolism; heme O biosynthesis; heme O from protoheme: step 1/1. Functionally, converts heme B (protoheme IX) to heme O by substitution of the vinyl group on carbon 2 of heme B porphyrin ring with a hydroxyethyl farnesyl side group. This chain is Protoheme IX farnesyltransferase 2, found in Pseudomonas paraeruginosa (strain DSM 24068 / PA7) (Pseudomonas aeruginosa (strain PA7)).